We begin with the raw amino-acid sequence, 251 residues long: 3-deoxy-manno-octulosonate cytidylyltransferase (251 aa).

It belongs to the KdsB family.

It is found in the cytoplasm. The enzyme catalyses 3-deoxy-alpha-D-manno-oct-2-ulosonate + CTP = CMP-3-deoxy-beta-D-manno-octulosonate + diphosphate. Its pathway is nucleotide-sugar biosynthesis; CMP-3-deoxy-D-manno-octulosonate biosynthesis; CMP-3-deoxy-D-manno-octulosonate from 3-deoxy-D-manno-octulosonate and CTP: step 1/1. It participates in bacterial outer membrane biogenesis; lipopolysaccharide biosynthesis. Functionally, activates KDO (a required 8-carbon sugar) for incorporation into bacterial lipopolysaccharide in Gram-negative bacteria. This Alcanivorax borkumensis (strain ATCC 700651 / DSM 11573 / NCIMB 13689 / SK2) protein is 3-deoxy-manno-octulosonate cytidylyltransferase.